The chain runs to 766 residues: Single-minded homolog 1 (766 aa).

Positions 1–53 (MKEKSKNAARTRREKENSEFYELAKLLPLPSAITSQLDKASIIRLTTSYLKMR) constitute a bHLH domain. 2 consecutive PAS domains span residues 77–147 (GREL…QPYH) and 218–288 (PPSA…LVKG). Residues 292–335 (TKYYRFLAKHGGWVWVQSYATIVHNSRSSRPHCIVSVNYVLTDT) enclose the PAC domain. The region spanning 336-766 (EYKGLQLSLD…GTSVIITNGS (431 aa)) is the Single-minded C-terminal domain. The segment covering 353–365 (AFSYTSSSTPTMT) has biased composition (polar residues). Disordered stretches follow at residues 353–431 (AFSY…SQHD) and 528–563 (WDEDSVVSSPDPGSASESGDRYRTEQYQSSPHEPSK). A Nuclear localization signal motif is present at residues 368 to 387 (RKGAKSRLSSSKSKSRTSPY). Residues 373–385 (SRLSSSKSKSRTS) are compositionally biased toward low complexity. Over residues 394-404 (HTERSESDHDS) the composition is skewed to basic and acidic residues.

In terms of assembly, efficient DNA binding requires dimerization with another bHLH protein. Heterodimer; forms a heterodimer with ARNT, ARNT2.

The protein localises to the nucleus. Functionally, transcriptional factor that may have pleiotropic effects during embryogenesis and in the adult. The sequence is that of Single-minded homolog 1 (SIM1) from Pan paniscus (Pygmy chimpanzee).